The sequence spans 396 residues: S-adenosylmethionine synthase (396 aa).

Position 14 (histidine 14) interacts with ATP. Mg(2+) is bound at residue aspartate 16. A K(+)-binding site is contributed by glutamate 42. Residues glutamate 55 and glutamine 98 each contribute to the L-methionine site. Residues 98–108 are flexible loop; that stretch reads QSPDIAMGVDK. ATP-binding positions include 174 to 176, 240 to 241, aspartate 249, 255 to 256, alanine 272, and lysine 276; these read DGK, RF, and RK. Aspartate 249 provides a ligand contact to L-methionine. Lysine 280 provides a ligand contact to L-methionine.

This sequence belongs to the AdoMet synthase family. In terms of assembly, homotetramer; dimer of dimers. Mg(2+) is required as a cofactor. It depends on K(+) as a cofactor.

Its subcellular location is the cytoplasm. It carries out the reaction L-methionine + ATP + H2O = S-adenosyl-L-methionine + phosphate + diphosphate. It participates in amino-acid biosynthesis; S-adenosyl-L-methionine biosynthesis; S-adenosyl-L-methionine from L-methionine: step 1/1. Catalyzes the formation of S-adenosylmethionine (AdoMet) from methionine and ATP. The overall synthetic reaction is composed of two sequential steps, AdoMet formation and the subsequent tripolyphosphate hydrolysis which occurs prior to release of AdoMet from the enzyme. The sequence is that of S-adenosylmethionine synthase from Caldicellulosiruptor saccharolyticus (strain ATCC 43494 / DSM 8903 / Tp8T 6331).